The primary structure comprises 143 residues: MFLGTYTPRLDDKGRLTLPAKFRDDLAGGLMVTKGQDHSLAVYPKEEFTALARRAAAASRSNPQARAFVRALAAGTDEQRPDAQGRITLSADHRRYANLSRDCVVIGSVDFLEIWDKQAWESYLAEHEEDYAQARDESLGGIF.

2 SpoVT-AbrB domains span residues 5–47 (TYTP…PKEE) and 76–119 (TDEQ…DKQA).

Belongs to the MraZ family. Forms oligomers.

Its subcellular location is the cytoplasm. The protein localises to the nucleoid. This is Transcriptional regulator MraZ from Nocardia farcinica (strain IFM 10152).